Here is a 453-residue protein sequence, read N- to C-terminus: tRNA modification GTPase MnmE (453 aa).

Positions 22, 79, and 119 each coordinate (6S)-5-formyl-5,6,7,8-tetrahydrofolate. Positions 215–376 (GMKVVIAGRP…LRQHLKECMG (162 aa)) constitute a TrmE-type G domain. Residue Asn225 coordinates K(+). GTP is bound by residues 225-230 (NAGKSS), 244-250 (TDIAGTT), 269-272 (DTAG), and 334-337 (NKAD). Ser229 contributes to the Mg(2+) binding site. Positions 244, 246, and 249 each coordinate K(+). A Mg(2+)-binding site is contributed by Thr250. (6S)-5-formyl-5,6,7,8-tetrahydrofolate is bound at residue Lys453.

It belongs to the TRAFAC class TrmE-Era-EngA-EngB-Septin-like GTPase superfamily. TrmE GTPase family. Homodimer. Heterotetramer of two MnmE and two MnmG subunits. It depends on K(+) as a cofactor.

The protein resides in the cytoplasm. Functionally, exhibits a very high intrinsic GTPase hydrolysis rate. Involved in the addition of a carboxymethylaminomethyl (cmnm) group at the wobble position (U34) of certain tRNAs, forming tRNA-cmnm(5)s(2)U34. This Vibrio cholerae serotype O1 (strain ATCC 39541 / Classical Ogawa 395 / O395) protein is tRNA modification GTPase MnmE.